The following is a 411-amino-acid chain: NADH-quinone oxidoreductase subunit D (411 aa).

It belongs to the complex I 49 kDa subunit family. In terms of assembly, NDH-1 is composed of 14 different subunits. Subunits NuoB, C, D, E, F, and G constitute the peripheral sector of the complex.

It localises to the cell inner membrane. It carries out the reaction a quinone + NADH + 5 H(+)(in) = a quinol + NAD(+) + 4 H(+)(out). In terms of biological role, NDH-1 shuttles electrons from NADH, via FMN and iron-sulfur (Fe-S) centers, to quinones in the respiratory chain. The immediate electron acceptor for the enzyme in this species is believed to be ubiquinone. Couples the redox reaction to proton translocation (for every two electrons transferred, four hydrogen ions are translocated across the cytoplasmic membrane), and thus conserves the redox energy in a proton gradient. The polypeptide is NADH-quinone oxidoreductase subunit D (Phenylobacterium zucineum (strain HLK1)).